Reading from the N-terminus, the 185-residue chain is MAAAARVSEVKAEGLLRGACTALAAAAALLVGLSTQTETVLLVRKKATVKDVQALWVLAMAAAAAAGYHLLQLLKCLYLGRVGGARPCRRSSRALAWTCLLLDKACAYTTFATTVAAAQACVVALDGAHALQWTKLCNIYTRFCEQVAGSLVLGMLAAVGTAVLSAASARNVFRHYASLETYAAH.

At 1–22 (MAAAARVSEVKAEGLLRGACTA) the chain is on the cytoplasmic side. Residues 23 to 43 (LAAAAALLVGLSTQTETVLLV) form a helical membrane-spanning segment. The Extracellular segment spans residues 44 to 53 (RKKATVKDVQ). The helical transmembrane segment at 54-74 (ALWVLAMAAAAAAGYHLLQLL) threads the bilayer. The Cytoplasmic portion of the chain corresponds to 75-104 (KCLYLGRVGGARPCRRSSRALAWTCLLLDK). Residues 105-125 (ACAYTTFATTVAAAQACVVAL) traverse the membrane as a helical segment. The Extracellular portion of the chain corresponds to 126-146 (DGAHALQWTKLCNIYTRFCEQ). A helical membrane pass occupies residues 147 to 167 (VAGSLVLGMLAAVGTAVLSAA). The Cytoplasmic portion of the chain corresponds to 168 to 185 (SARNVFRHYASLETYAAH).

Belongs to the Casparian strip membrane proteins (CASP) family. Homodimer and heterodimers.

It is found in the cell membrane. The polypeptide is CASP-like protein 2C2 (Zea mays (Maize)).